The primary structure comprises 425 residues: Serine--tRNA ligase (425 aa).

Residue 231–233 coordinates L-serine; that stretch reads TAE. Residue 262-264 participates in ATP binding; it reads RSE. Glu-285 provides a ligand contact to L-serine. Residue 349–352 participates in ATP binding; sequence EISS. Ser-385 lines the L-serine pocket.

It belongs to the class-II aminoacyl-tRNA synthetase family. Type-1 seryl-tRNA synthetase subfamily. In terms of assembly, homodimer. The tRNA molecule binds across the dimer.

Its subcellular location is the cytoplasm. It carries out the reaction tRNA(Ser) + L-serine + ATP = L-seryl-tRNA(Ser) + AMP + diphosphate + H(+). The enzyme catalyses tRNA(Sec) + L-serine + ATP = L-seryl-tRNA(Sec) + AMP + diphosphate + H(+). Its pathway is aminoacyl-tRNA biosynthesis; selenocysteinyl-tRNA(Sec) biosynthesis; L-seryl-tRNA(Sec) from L-serine and tRNA(Sec): step 1/1. Its function is as follows. Catalyzes the attachment of serine to tRNA(Ser). Is also able to aminoacylate tRNA(Sec) with serine, to form the misacylated tRNA L-seryl-tRNA(Sec), which will be further converted into selenocysteinyl-tRNA(Sec). The chain is Serine--tRNA ligase from Alkaliphilus oremlandii (strain OhILAs) (Clostridium oremlandii (strain OhILAs)).